A 78-amino-acid chain; its full sequence is Small ribosomal subunit protein uS19m (78 aa).

The protein belongs to the universal ribosomal protein uS19 family.

It is found in the mitochondrion. The polypeptide is Small ribosomal subunit protein uS19m (RPS19) (Acanthamoeba castellanii (Amoeba)).